Here is a 402-residue protein sequence, read N- to C-terminus: Protein arginine methyltransferase NDUFAF7 homolog, mitochondrial (402 aa).

This sequence belongs to the NDUFAF7 family.

The protein localises to the mitochondrion. The catalysed reaction is L-arginyl-[protein] + 2 S-adenosyl-L-methionine = N(omega),N(omega)'-dimethyl-L-arginyl-[protein] + 2 S-adenosyl-L-homocysteine + 2 H(+). Arginine methyltransferase involved in the assembly or stability of mitochondrial NADH:ubiquinone oxidoreductase complex (complex I). This Saccharomyces cerevisiae (strain ATCC 204508 / S288c) (Baker's yeast) protein is Protein arginine methyltransferase NDUFAF7 homolog, mitochondrial.